Consider the following 173-residue polypeptide: Alpha-crystallin A chain (173 aa).

N-acetylmethionine is present on Met-1. The required for complex formation with BFSP1 and BFSP2 stretch occupies residues 1–63 (MDIAIQHPWF…RTVLDSGISE (63 aa)). Gln-6 carries the deamidated glutamine; partial modification. The residue at position 45 (Ser-45) is a Phosphoserine. Deamidated glutamine; partial is present on Gln-50. One can recognise a sHSP domain in the interval 52-162 (LFRTVLDSGI…GHSERAIPVS (111 aa)). Position 70 is an N6-acetyllysine (Lys-70). Gln-90 bears the Deamidated glutamine; partial mark. Lys-99 carries the N6-acetyllysine modification. His-100 contacts Zn(2+). Asn-101 is subject to Deamidated asparagine; partial. Zn(2+) is bound by residues Glu-102 and His-107. Ser-122 is modified (phosphoserine). Asn-123 carries the deamidated asparagine; partial modification. Positions 144-173 (PKVPSGMDAGHSERAIPVSREEKPSSAPSS) are disordered. Basic and acidic residues predominate over residues 153 to 167 (GHSERAIPVSREEKP). His-154 is a binding site for Zn(2+). O-linked (GlcNAc) serine glycosylation occurs at Ser-162.

The protein belongs to the small heat shock protein (HSP20) family. In terms of assembly, heteromer composed of three CRYAA and one CRYAB subunits. Inter-subunit bridging via zinc ions enhances stability, which is crucial as there is no protein turn over in the lens. Can also form homodimers and homotetramers (dimers of dimers) which serve as the building blocks of homooligomers. Within homooligomers, the zinc-binding motif is created from residues of 3 different molecules. His-100 and Glu-102 from one molecule are ligands of the zinc ion, and His-107 and His-154 residues from additional molecules complete the site with tetrahedral coordination geometry. Part of a complex required for lens intermediate filament formation composed of BFSP1, BFSP2 and CRYAA. Post-translationally, acetylation at Lys-70 may increase chaperone activity. Undergoes age-dependent proteolytical cleavage at the C-terminus.

It is found in the cytoplasm. It localises to the nucleus. Contributes to the transparency and refractive index of the lens. Acts as a chaperone, preventing aggregation of various proteins under a wide range of stress conditions. Required for the correct formation of lens intermediate filaments as part of a complex composed of BFSP1, BFSP2 and CRYAA. This is Alpha-crystallin A chain (CRYAA) from Balaenoptera acutorostrata (Common minke whale).